Consider the following 399-residue polypeptide: Transcription termination factor 1, mitochondrial (399 aa).

The transit peptide at 1 to 57 (MQSLSLGQTSISKGLNYLTIMAPGNLWHMRNNFLFGSRCWMTRFSAENIFKSVSFRL) directs the protein to the mitochondrion. Interaction with DNA stretches follow at residues 169–170 (RS), 247–251 (QSTKR), 324–331 (AEKKFNDK), 355–358 (SIST), and 384–391 (SKKRYEAK).

Belongs to the mTERF family. Monomer. Post-translationally, phosphoprotein with mostly four phosphate groups. While the DNA-binding activity is unaffected by the phosphorylation state, only the phosphorylated form of the protein is active for termination activity. Functioning seems to be regulated by phosphorylation.

The protein resides in the mitochondrion. Its function is as follows. Transcription termination factor. Binds to a 28 bp region within the tRNA(Leu(uur)) gene at a position immediately adjacent to and downstream of the 16S rRNA gene; this region comprises a tridecamer sequence critical for directing accurate termination. Binds DNA along the major grove and promotes DNA bending and partial unwinding. Promotes base flipping. Transcription termination activity appears to be polarized with highest specificity for transcripts initiated on the light strand. The protein is Transcription termination factor 1, mitochondrial (MTERF1) of Homo sapiens (Human).